The primary structure comprises 257 residues: Protein windbeutel (257 aa).

Residues 1–21 (MMHILVTLLLVAIHSIPTTWA) form the signal peptide. Positions 24–27 (CTGC) are CXXC motif. Positions 254 to 257 (KEEL) match the Prevents secretion from ER motif.

Homodimer. Interacts with pip; the interaction is direct and does not require pip to be folded. Briefly expressed in the follicle cells of the ovary, at around the time when the dorsoventral axis of the egg chamber is first established.

Its subcellular location is the endoplasmic reticulum lumen. Functionally, probable chaperone protein involved in dorsoventral axis patterning in early embryos. Probably acts by folding and targeting pipe (pip) into the Golgi. This Drosophila melanogaster (Fruit fly) protein is Protein windbeutel.